Reading from the N-terminus, the 212-residue chain is Large ribosomal subunit protein bL25 (212 aa).

Positions Glu179–Asp212 are disordered.

The protein belongs to the bacterial ribosomal protein bL25 family. CTC subfamily. In terms of assembly, part of the 50S ribosomal subunit; part of the 5S rRNA/L5/L18/L25 subcomplex. Contacts the 5S rRNA. Binds to the 5S rRNA independently of L5 and L18.

Its function is as follows. This is one of the proteins that binds to the 5S RNA in the ribosome where it forms part of the central protuberance. The protein is Large ribosomal subunit protein bL25 of Corynebacterium urealyticum (strain ATCC 43042 / DSM 7109).